Here is a 291-residue protein sequence, read N- to C-terminus: MMTQSIRRSMLTVMATLPLLFSSATLHAQANSVQQQLEALEKSSGGRLGVALINTADNSQILYVADERFAMCSTSKVMAAAAVLKQSESDKHLLNQRVEIRASDLVNYNPIAEKHVNGTMTLAQLGAGALQYSDNTAMNKLIAHLGGPDKVTAFARSLGDETFRLDRTEPTLNSAIPGDPRDTTTPLAMAQTLKNLTLGKALAETQRAQLVTWLKGNTTGSASIRAGLPKSWGVGDKTGSGDYGTTNDIAVIWPENHAPLVLVTYFTQPEQKAESRRDVLAAAAKIVTHGF.

The N-terminal stretch at 1 to 28 is a signal peptide; that stretch reads MMTQSIRRSMLTVMATLPLLFSSATLHA. The Acyl-ester intermediate role is filled by S73. Substrate is bound at residue 237-239; that stretch reads KTG.

This sequence belongs to the class-A beta-lactamase family.

It catalyses the reaction a beta-lactam + H2O = a substituted beta-amino acid. Functionally, has cefotaxime-hydrolyzing activity. This chain is Beta-lactamase CTX-M-6 (bla), found in Salmonella typhimurium.